Reading from the N-terminus, the 53-residue chain is Reg12l (53 aa).

Positions 1 to 34 are excised as a propeptide; the sequence is RVLFRSGDQPADQPAERMQDISPEQNPLFHPDKR. 3 cysteine pairs are disulfide-bonded: C36–C50, C37–C48, and C42–C51.

The protein belongs to the conotoxin M superfamily. As to expression, expressed by the venom duct.

Its subcellular location is the secreted. The chain is Reg12l from Conus regius (Crown cone).